The primary structure comprises 55 residues: Caltrin-like protein 2 (55 aa).

The 49-residue stretch at 7–55 (AINRPGSCPRVMIYCPARHPPNKCTSDYDCPKPQKCCPGYCGKQCYQPE) folds into the WAP domain.

Glycosylated.

In terms of biological role, inhibits calcium transport into spermatozoa. The polypeptide is Caltrin-like protein 2 (Cavia porcellus (Guinea pig)).